The chain runs to 274 residues: Diaminopimelate epimerase (274 aa).

Asn11, Gln44, and Asn64 together coordinate substrate. Cys73 acts as the Proton donor in catalysis. Substrate-binding positions include 74 to 75 (GN), Asn157, Asn190, and 208 to 209 (ER). Cys217 acts as the Proton acceptor in catalysis. 218-219 (GS) serves as a coordination point for substrate.

It belongs to the diaminopimelate epimerase family. As to quaternary structure, homodimer.

It is found in the cytoplasm. It catalyses the reaction (2S,6S)-2,6-diaminopimelate = meso-2,6-diaminopimelate. The protein operates within amino-acid biosynthesis; L-lysine biosynthesis via DAP pathway; DL-2,6-diaminopimelate from LL-2,6-diaminopimelate: step 1/1. Its function is as follows. Catalyzes the stereoinversion of LL-2,6-diaminopimelate (L,L-DAP) to meso-diaminopimelate (meso-DAP), a precursor of L-lysine and an essential component of the bacterial peptidoglycan. This chain is Diaminopimelate epimerase, found in Haemophilus influenzae (strain PittEE).